The sequence spans 115 residues: Putative septation protein SpoVG (115 aa).

Residues 88-115 (PGTIATSEVSSQLEESDSDKTLSEDLKA) are disordered. Residues 91-100 (IATSEVSSQL) are compositionally biased toward polar residues. Residues 105 to 115 (SDKTLSEDLKA) are compositionally biased toward basic and acidic residues.

Belongs to the SpoVG family.

Its function is as follows. Could be involved in septation. The chain is Putative septation protein SpoVG from Macrococcus caseolyticus (strain JCSC5402) (Macrococcoides caseolyticum).